A 681-amino-acid chain; its full sequence is DNA ligase (681 aa).

Residues 34–38, 83–84, and Glu115 each bind NAD(+); these read DAEYD and SL. Catalysis depends on Lys117, which acts as the N6-AMP-lysine intermediate. The NAD(+) site is built by Arg138, Glu185, Lys301, and Lys325. 4 residues coordinate Zn(2+): Cys419, Cys422, Cys437, and Cys443. The BRCT domain occupies 602 to 681; that stretch reads RKSDVLAGQT…AALLALIGER (80 aa).

This sequence belongs to the NAD-dependent DNA ligase family. LigA subfamily. It depends on Mg(2+) as a cofactor. Mn(2+) is required as a cofactor.

It carries out the reaction NAD(+) + (deoxyribonucleotide)n-3'-hydroxyl + 5'-phospho-(deoxyribonucleotide)m = (deoxyribonucleotide)n+m + AMP + beta-nicotinamide D-nucleotide.. DNA ligase that catalyzes the formation of phosphodiester linkages between 5'-phosphoryl and 3'-hydroxyl groups in double-stranded DNA using NAD as a coenzyme and as the energy source for the reaction. It is essential for DNA replication and repair of damaged DNA. This Chloroflexus aggregans (strain MD-66 / DSM 9485) protein is DNA ligase.